The sequence spans 398 residues: Ubiquitin-like modifier-activating enzyme 5 (398 aa).

Gly-76, Asp-97, Lys-120, Asn-143, and Asn-177 together coordinate ATP. Residues Cys-219 and Cys-222 each coordinate Zn(2+). Catalysis depends on Cys-243, which acts as the Glycyl thioester intermediate. 2 residues coordinate Zn(2+): Cys-296 and Cys-301.

It belongs to the ubiquitin-activating E1 family. UBA5 subfamily.

Functionally, E1-like enzyme which activates UFM1. The protein is Ubiquitin-like modifier-activating enzyme 5 of Drosophila grimshawi (Hawaiian fruit fly).